An 89-amino-acid polypeptide reads, in one-letter code: UPF0367 protein P9515_01381 (89 aa).

This sequence belongs to the UPF0367 family.

The chain is UPF0367 protein P9515_01381 from Prochlorococcus marinus (strain MIT 9515).